We begin with the raw amino-acid sequence, 128 residues long: MKLHLLKSKIHNAIVTSGDLEYEGSITIDSELLEMAQMIPNEKVLVVNNNNGERFETYIIKGDYGSRVIQLNGAAARCALPGDEIIIMTFAVMDEKEAGSHKPMVLIVDRNNNPKRRHRVGEEDELLS.

The active-site Schiff-base intermediate with substrate; via pyruvic acid is serine 25. Residue serine 25 is modified to Pyruvic acid (Ser). Threonine 57 provides a ligand contact to substrate. The active-site Proton donor is tyrosine 58. 73–75 (GAA) is a binding site for substrate.

This sequence belongs to the PanD family. As to quaternary structure, heterooctamer of four alpha and four beta subunits. Pyruvate is required as a cofactor. Post-translationally, is synthesized initially as an inactive proenzyme, which is activated by self-cleavage at a specific serine bond to produce a beta-subunit with a hydroxyl group at its C-terminus and an alpha-subunit with a pyruvoyl group at its N-terminus.

It is found in the cytoplasm. It carries out the reaction L-aspartate + H(+) = beta-alanine + CO2. The protein operates within cofactor biosynthesis; (R)-pantothenate biosynthesis; beta-alanine from L-aspartate: step 1/1. Functionally, catalyzes the pyruvoyl-dependent decarboxylation of aspartate to produce beta-alanine. The sequence is that of Aspartate 1-decarboxylase from Chlorobium limicola (strain DSM 245 / NBRC 103803 / 6330).